The following is a 425-amino-acid chain: MGSPFKDHHTLHPSLVRKLIPWTFYAMVPLVLFRVYLYPYPLHHTTTTILTSSPVSPPPALLEDETSCDYTDGNWVPDRRDPLYNGSTCGTIKEGQSCIAHGRPDMGYLYWRWKPKQCKLPRFEPNTFLQLLRNKHLAFVGDSMARNQLESLLCMLSSVSPPNLVYRDGEENKFRRWYFESHNFSISVYWSPFLVRGVEKSNTGLNHNQLFLDHVDERWAADMNGIDMVVLSIGHWFLHPAVYYEGDQVLGCHYCPDLNHTEIGFYDILRKAIKTTLKALVDRKGPNDNGFDALVTTFSPAHFEGDWDKLGACPKTEPCKEGEKTLEGMDAEMRQVEVEEVEAAKMNSVQLEKFRLEALDVSKLSLMRPDGHPGPYMHPFPFAYGVAERVQNDCVHWCLPGPIDTWNEILLEVIKKWEYASRREQ.

The Cytoplasmic portion of the chain corresponds to 1–18; that stretch reads MGSPFKDHHTLHPSLVRK. Residues 19 to 38 form a helical; Signal-anchor for type II membrane protein membrane-spanning segment; sequence LIPWTFYAMVPLVLFRVYLY. Topologically, residues 39 to 425 are lumenal; the sequence is PYPLHHTTTT…KWEYASRREQ (387 aa). Cystine bridges form between C68–C118, C89–C154, C98–C398, and C313–C394. N85 carries an N-linked (GlcNAc...) asparagine glycan. The GDS motif signature appears at 141–143; the sequence is GDS. The active-site Nucleophile is S143. N-linked (GlcNAc...) asparagine glycans are attached at residues N183 and N259. D393 (proton donor) is an active-site residue. A DXXH motif motif is present at residues 393 to 396; sequence DCVH. H396 serves as the catalytic Proton acceptor.

The protein belongs to the PC-esterase family. TBL subfamily.

The protein resides in the golgi apparatus membrane. In terms of biological role, xyloglucan acetyltransferase that catalyzes the acetylation of fucosylated Gal residues on xyloglucan side chains. Predominantly catalyze 6-O-monoacetylation of Gal residues in the Fuc-Gal-Xyl trisaccharide side chains of xyloglucan oligomers. In Populus trichocarpa (Western balsam poplar), this protein is Xyloglucan O-acetyltransferase 2.